The sequence spans 201 residues: Rho GDP-dissociation inhibitor 2 (201 aa).

The tract at residues Met-1–Met-38 is disordered. At Thr-2 the chain carries N-acetylthreonine. At Lys-21 the chain carries N6-acetyllysine. A Phosphotyrosine modification is found at Tyr-24. Residues Lys-25, Lys-40, Lys-47, Lys-102, and Lys-124 each carry the N6-acetyllysine modification. Ser-145 is subject to Phosphoserine. Position 175 is an N6-acetyllysine (Lys-175).

Belongs to the Rho GDI family. Interacts with RHOA. Interacts with RAC1. Interacts with RAC2. Interacts with CDC42. Detected in bone marrow, thymus and spleen.

It is found in the cytoplasm. It localises to the cytosol. Functionally, regulates the GDP/GTP exchange reaction of the Rho proteins by inhibiting the dissociation of GDP from them, and the subsequent binding of GTP to them. Regulates reorganization of the actin cytoskeleton mediated by Rho family members. This is Rho GDP-dissociation inhibitor 2 (ARHGDIB) from Homo sapiens (Human).